The sequence spans 150 residues: Bcl-2-interacting killer (150 aa).

Residues 51–65 carry the BH3 motif; sequence VALRLACIGDEMDLC. A helical transmembrane segment spans residues 127-147; that stretch reads PGQLFPMVLLVFLLLGGAWYL. The leucine-zipper stretch occupies residues 127-148; that stretch reads PGQLFPMVLLVFLLLGGAWYLQ.

In terms of assembly, interacts with RHBDL4/RHBDD1. Interacts with BCL2L10/BCL-B. Proteolytically cleaved by RHBDL4/RHBDD1. RHBDL4/RHBDD1-induced cleavage is a necessary step prior its degradation by the proteosome-dependent mechanism. In terms of processing, ubiquitinated by the ECS(ASB11) complex in response to endoplasmic reticulum stress, leading to substrate recognition by the segregase p97/VCP and degradation by the proteasome. In terms of tissue distribution, expressed in testis, kidney, liver, lung and heart.

Its subcellular location is the endomembrane system. It localises to the mitochondrion membrane. Functionally, accelerates programmed cell death. Binding to the apoptosis repressors Bcl-X(L), BHRF1 or Bcl-2 suppresses this death-promoting activity. This is Bcl-2-interacting killer (Bik) from Mus musculus (Mouse).